The chain runs to 285 residues: Undecaprenyl-diphosphatase (285 aa).

A run of 7 helical transmembrane segments spans residues 12 to 34 (IVIA…HAVI), 49 to 69 (IFLP…LVYF), 93 to 113 (IHIL…GGLL), 120 to 140 (LFGT…LLLL), 159 to 179 (LTYA…LPGI), 234 to 254 (VATI…AFLM), and 263 to 283 (WALS…FFIL).

The protein belongs to the UppP family.

The protein localises to the cell inner membrane. The enzyme catalyses di-trans,octa-cis-undecaprenyl diphosphate + H2O = di-trans,octa-cis-undecaprenyl phosphate + phosphate + H(+). Functionally, catalyzes the dephosphorylation of undecaprenyl diphosphate (UPP). Confers resistance to bacitracin. This is Undecaprenyl-diphosphatase from Gluconacetobacter diazotrophicus (strain ATCC 49037 / DSM 5601 / CCUG 37298 / CIP 103539 / LMG 7603 / PAl5).